Here is a 434-residue protein sequence, read N- to C-terminus: Ribosomal protein uS12 methylthiotransferase RimO (434 aa).

The MTTase N-terminal domain maps to 4–122 (NRVDVITLGC…LISHLGKSYY (119 aa)). Residues cysteine 13, cysteine 51, cysteine 85, cysteine 146, cysteine 150, and cysteine 153 each contribute to the [4Fe-4S] cluster site. The region spanning 132–363 (TTPRHYAYLK…MAVQERISAA (232 aa)) is the Radical SAM core domain. The region spanning 366-434 (EAKIGSRLRV…PFDLYARIVD (69 aa)) is the TRAM domain.

It belongs to the methylthiotransferase family. RimO subfamily. [4Fe-4S] cluster serves as cofactor.

It localises to the cytoplasm. It carries out the reaction L-aspartate(89)-[ribosomal protein uS12]-hydrogen + (sulfur carrier)-SH + AH2 + 2 S-adenosyl-L-methionine = 3-methylsulfanyl-L-aspartate(89)-[ribosomal protein uS12]-hydrogen + (sulfur carrier)-H + 5'-deoxyadenosine + L-methionine + A + S-adenosyl-L-homocysteine + 2 H(+). In terms of biological role, catalyzes the methylthiolation of an aspartic acid residue of ribosomal protein uS12. The chain is Ribosomal protein uS12 methylthiotransferase RimO from Porphyromonas gingivalis (strain ATCC 33277 / DSM 20709 / CIP 103683 / JCM 12257 / NCTC 11834 / 2561).